A 117-amino-acid chain; its full sequence is Large ribosomal subunit protein bL20 (117 aa).

It belongs to the bacterial ribosomal protein bL20 family.

In terms of biological role, binds directly to 23S ribosomal RNA and is necessary for the in vitro assembly process of the 50S ribosomal subunit. It is not involved in the protein synthesizing functions of that subunit. The polypeptide is Large ribosomal subunit protein bL20 (Vibrio cholerae serotype O1 (strain ATCC 39541 / Classical Ogawa 395 / O395)).